A 443-amino-acid polypeptide reads, in one-letter code: C4-dicarboxylate transport protein (443 aa).

10 helical membrane-spanning segments follow: residues 10 to 30 (SLYF…HFYP), 46 to 66 (LIKM…IAGM), 78 to 98 (YALL…LIVV), 130 to 150 (SIVG…FANG), 152 to 172 (ILQV…LGAY), 199 to 219 (PLGA…GSLV), 224 to 244 (LMIC…GAIC), 291 to 311 (VVGL…SIYL), 332 to 352 (ITLL…TGSG), and 354 to 374 (IVLA…LALI). Residues 415–443 (ELASGGRPITDTRETDDLGVAEGPAPSIK) are disordered.

Belongs to the dicarboxylate/amino acid:cation symporter (DAACS) (TC 2.A.23) family.

Its subcellular location is the cell inner membrane. Its function is as follows. Responsible for the transport of dicarboxylates such as succinate, fumarate, and malate from the periplasm across the membrane. This is C4-dicarboxylate transport protein from Pseudomonas fluorescens (strain ATCC BAA-477 / NRRL B-23932 / Pf-5).